The primary structure comprises 143 residues: Putative pre-16S rRNA nuclease (143 aa).

This sequence belongs to the YqgF nuclease family.

The protein resides in the cytoplasm. Could be a nuclease involved in processing of the 5'-end of pre-16S rRNA. The polypeptide is Putative pre-16S rRNA nuclease (Lactococcus lactis subsp. cremoris (strain MG1363)).